The following is a 626-amino-acid chain: Polypeptide N-acetylgalactosaminyltransferase 5 (626 aa).

Over 1 to 11 (MIIFKKKAILK) the chain is Cytoplasmic. Residues 12–31 (VLLLVPVFWICSLIFFAATS) traverse the membrane as a helical; Signal-anchor for type II membrane protein segment. Asparagine 32 carries an N-linked (GlcNAc...) asparagine glycan. The Lumenal segment spans residues 32–626 (NDSSQIGSNN…AIEHGAKPPS (595 aa)). 5 disulfides stabilise this stretch: cysteine 165–cysteine 399, cysteine 390–cysteine 466, cysteine 502–cysteine 521, cysteine 544–cysteine 557, and cysteine 583–cysteine 598. The tract at residues 174–284 (LPRTSVIICF…EGWMEPLLDR (111 aa)) is catalytic subdomain A. Substrate-binding residues include aspartate 215 and arginine 245. Residue aspartate 268 coordinates Mn(2+). A substrate-binding site is contributed by serine 269. Residue histidine 270 participates in Mn(2+) binding. Asparagine 338 carries an N-linked (GlcNAc...) asparagine glycan. The tract at residues 345–407 (PVRSPTMAGG…PCSHVGHVFR (63 aa)) is catalytic subdomain B. Tryptophan 376 is a binding site for substrate. Histidine 404 is a Mn(2+) binding site. Residues arginine 407 and tyrosine 412 each contribute to the substrate site. The Ricin B-type lectin domain occupies 488 to 610 (AKGEVRNSAV…DDPYQHWKFK (123 aa)).

Belongs to the glycosyltransferase 2 family. GalNAc-T subfamily. Mn(2+) serves as cofactor.

Its subcellular location is the golgi apparatus membrane. It carries out the reaction L-seryl-[protein] + UDP-N-acetyl-alpha-D-galactosamine = a 3-O-[N-acetyl-alpha-D-galactosaminyl]-L-seryl-[protein] + UDP + H(+). The catalysed reaction is L-threonyl-[protein] + UDP-N-acetyl-alpha-D-galactosamine = a 3-O-[N-acetyl-alpha-D-galactosaminyl]-L-threonyl-[protein] + UDP + H(+). It functions in the pathway protein modification; protein glycosylation. Its function is as follows. Catalyzes the initial reaction in O-linked oligosaccharide biosynthesis, the transfer of an N-acetyl-D-galactosamine residue to a serine or threonine residue on the protein receptor. The sequence is that of Polypeptide N-acetylgalactosaminyltransferase 5 (gly-5) from Caenorhabditis elegans.